Consider the following 75-residue polypeptide: Insecticidal toxin OcyC10 (75 aa).

A signal peptide spans 1-19 (MNFATKIVILLLVAALILA). 2 disulfide bridges follow: cysteine 50–cysteine 62 and cysteine 56–cysteine 68.

Expressed by the venom gland.

Its subcellular location is the secreted. Insecticidal toxin. The chain is Insecticidal toxin OcyC10 from Opisthacanthus cayaporum (South American scorpion).